Consider the following 84-residue polypeptide: Small ribosomal subunit protein eS27-like (84 aa).

Residues 1 to 16 (MPLARDLLHPSLDEEK) show a composition bias toward basic and acidic residues. The tract at residues 1–23 (MPLARDLLHPSLDEEKKKHKKKR) is disordered. The C4-type zinc-finger motif lies at 38 to 60 (PGCYKITTVFSHAQTVVLCVGCS).

This sequence belongs to the eukaryotic ribosomal protein eS27 family. The cofactor is Zn(2+).

The polypeptide is Small ribosomal subunit protein eS27-like (RPS27L) (Bos taurus (Bovine)).